Here is a 307-residue protein sequence, read N- to C-terminus: 4-hydroxy-tetrahydrodipicolinate synthase (307 aa).

Thr49 is a pyruvate binding site. The Proton donor/acceptor role is filled by Tyr138. Residue Lys166 is the Schiff-base intermediate with substrate of the active site. Ile207 contacts pyruvate.

This sequence belongs to the DapA family. As to quaternary structure, homotetramer; dimer of dimers.

The protein localises to the cytoplasm. It carries out the reaction L-aspartate 4-semialdehyde + pyruvate = (2S,4S)-4-hydroxy-2,3,4,5-tetrahydrodipicolinate + H2O + H(+). It functions in the pathway amino-acid biosynthesis; L-lysine biosynthesis via DAP pathway; (S)-tetrahydrodipicolinate from L-aspartate: step 3/4. In terms of biological role, catalyzes the condensation of (S)-aspartate-beta-semialdehyde [(S)-ASA] and pyruvate to 4-hydroxy-tetrahydrodipicolinate (HTPA). This is 4-hydroxy-tetrahydrodipicolinate synthase from Limosilactobacillus reuteri (strain DSM 20016) (Lactobacillus reuteri).